We begin with the raw amino-acid sequence, 344 residues long: Dihydroorotate dehydrogenase (quinone) (344 aa).

FMN contacts are provided by residues 62 to 66 and Thr-86; that span reads AGLDK. Lys-66 is a substrate binding site. A substrate-binding site is contributed by 111 to 115; that stretch reads NRMGF. The FMN site is built by Asn-139 and Asn-172. Residue Asn-172 coordinates substrate. The Nucleophile role is filled by Ser-175. Asn-177 serves as a coordination point for substrate. 2 residues coordinate FMN: Lys-217 and Thr-245. 246–247 lines the substrate pocket; it reads NT. Residues Gly-268, Gly-297, and 318–319 each bind FMN; that span reads YS.

The protein belongs to the dihydroorotate dehydrogenase family. Type 2 subfamily. In terms of assembly, monomer. FMN serves as cofactor.

It is found in the cell membrane. It catalyses the reaction (S)-dihydroorotate + a quinone = orotate + a quinol. The protein operates within pyrimidine metabolism; UMP biosynthesis via de novo pathway; orotate from (S)-dihydroorotate (quinone route): step 1/1. Its function is as follows. Catalyzes the conversion of dihydroorotate to orotate with quinone as electron acceptor. This chain is Dihydroorotate dehydrogenase (quinone), found in Chromobacterium violaceum (strain ATCC 12472 / DSM 30191 / JCM 1249 / CCUG 213 / NBRC 12614 / NCIMB 9131 / NCTC 9757 / MK).